The following is a 150-amino-acid chain: MKLILTAAVENLGVAGDIVEVKDGYGRNLLLPRGLAIPATPGAEKQIEGIKRAQEARAIRDLDHAREVKAQLEALEGVKVAVRTSESGKLFGSVKADDIVDAVKAAGGPNLDKRAIVLPKNLVKTTGKYQVEAKIHEGIVSRVKFEVVAA.

It belongs to the bacterial ribosomal protein bL9 family.

Binds to the 23S rRNA. The polypeptide is Large ribosomal subunit protein bL9 (Corynebacterium efficiens (strain DSM 44549 / YS-314 / AJ 12310 / JCM 11189 / NBRC 100395)).